The primary structure comprises 471 residues: Putative multidrug resistance protein MdtD (471 aa).

Over 1 to 11 the chain is Periplasmic; sequence MTDLPDSTRWQ. Residues 12–32 form a helical membrane-spanning segment; the sequence is LWIVAFGFFMQSLDTTIVNTA. Over 33-48 the chain is Cytoplasmic; it reads LPSMAQSLGESPLHMH. The chain crosses the membrane as a helical span at residues 49–69; it reads MVIVSYVLTVAVMLPASGWLA. The Periplasmic segment spans residues 70 to 76; sequence DKVGVRN. The helical transmembrane segment at 77-97 threads the bilayer; it reads IFFTAIVLFTLGSLFCALSAT. Residues 98–101 lie on the Cytoplasmic side of the membrane; that stretch reads LNEL. Residues 102–124 traverse the membrane as a helical segment; the sequence is LLARALQGVGGAMMVPVGRLTVM. The Periplasmic segment spans residues 125–137; it reads KIVPREQYMAAMT. Residues 138–158 form a helical membrane-spanning segment; it reads FVTLPGQVGPLLGPALGGLLV. Residues 159–164 are Cytoplasmic-facing; sequence EYASWH. A helical transmembrane segment spans residues 165–185; it reads WIFLINIPVGIIGAIATLMLM. Residues 186-196 are Periplasmic-facing; that stretch reads PNYTMQTRRFD. The helical transmembrane segment at 197–217 threads the bilayer; that stretch reads LSGFLLLAVGMAVLTLALDGS. The Cytoplasmic portion of the chain corresponds to 218 to 224; sequence KGTGLSP. Residues 225–245 form a helical membrane-spanning segment; it reads LAIAGLAAIGVVALVLYLLHA. At 246–262 the chain is on the periplasmic side; it reads RNNNRALFSLKLFRTRT. Residues 263–283 traverse the membrane as a helical segment; it reads FSLGLAGSFAGRIGSGMLPFM. Residues 284 to 285 lie on the Cytoplasmic side of the membrane; it reads TP. Residues 286–306 form a helical membrane-spanning segment; sequence VFLQIGLGFSPFHAGLMMIPM. At 307–341 the chain is on the periplasmic side; it reads VLGSMGMKRIVVQVVNRFGYRRVLVATTLGLSLVT. Residues 342–362 form a helical membrane-spanning segment; it reads LLFMTTALLGWYYVLPFVLFL. The Cytoplasmic portion of the chain corresponds to 363–395; it reads QGMVNSTRFSSMNTLTLKDLPDNLASSGNSLLS. Residues 396-416 traverse the membrane as a helical segment; that stretch reads MIMQLSMSIGVTIAGLLLGLF. Topologically, residues 417–430 are periplasmic; the sequence is GSQHVSVDSSTTQT. A helical membrane pass occupies residues 431–451; it reads VFMYTWLSMALIIALPAFIFA. The Cytoplasmic segment spans residues 452 to 471; that stretch reads RVPNDTHQNVAISRRKRSAQ.

It belongs to the major facilitator superfamily. TCR/Tet family.

The protein localises to the cell inner membrane. The polypeptide is Putative multidrug resistance protein MdtD (Escherichia fergusonii (strain ATCC 35469 / DSM 13698 / CCUG 18766 / IAM 14443 / JCM 21226 / LMG 7866 / NBRC 102419 / NCTC 12128 / CDC 0568-73)).